The primary structure comprises 948 residues: Protein translocase subunit SecA (948 aa).

ATP contacts are provided by residues Q90, 108–112, and D509; that span reads GEGKT.

The protein belongs to the SecA family. In terms of assembly, monomer and homodimer. Part of the essential Sec protein translocation apparatus which comprises SecA, SecYEG and auxiliary proteins SecDF. Other proteins may also be involved.

It localises to the cell inner membrane. It is found in the cellular thylakoid membrane. The protein resides in the cytoplasm. The catalysed reaction is ATP + H2O + cellular proteinSide 1 = ADP + phosphate + cellular proteinSide 2.. Part of the Sec protein translocase complex. Interacts with the SecYEG preprotein conducting channel. Has a central role in coupling the hydrolysis of ATP to the transfer of proteins into and across the cell membrane, serving as an ATP-driven molecular motor driving the stepwise translocation of polypeptide chains across the membrane. In terms of biological role, probably participates in protein translocation into and across both the cytoplasmic and thylakoid membranes in cyanobacterial cells. This Prochlorococcus marinus (strain MIT 9313) protein is Protein translocase subunit SecA.